The primary structure comprises 726 residues: DNA-directed RNA polymerase subunit beta N-terminal section (726 aa).

It belongs to the RNA polymerase beta chain family. In plastids the minimal PEP RNA polymerase catalytic core is composed of four subunits: alpha, beta, beta', and beta''. When a (nuclear-encoded) sigma factor is associated with the core the holoenzyme is formed, which can initiate transcription.

The protein resides in the plastid. It is found in the chloroplast. The enzyme catalyses RNA(n) + a ribonucleoside 5'-triphosphate = RNA(n+1) + diphosphate. Functionally, DNA-dependent RNA polymerase catalyzes the transcription of DNA into RNA using the four ribonucleoside triphosphates as substrates. In Tetradesmus obliquus (Green alga), this protein is DNA-directed RNA polymerase subunit beta N-terminal section (rpoB1).